Reading from the N-terminus, the 428-residue chain is Serine--tRNA ligase (428 aa).

231 to 233 provides a ligand contact to L-serine; it reads TAE. 262 to 264 serves as a coordination point for ATP; it reads RSE. Residue E285 participates in L-serine binding. ATP is bound at residue 349-352; the sequence is EISS. S385 is an L-serine binding site.

This sequence belongs to the class-II aminoacyl-tRNA synthetase family. Type-1 seryl-tRNA synthetase subfamily. In terms of assembly, homodimer. The tRNA molecule binds across the dimer.

It is found in the cytoplasm. It catalyses the reaction tRNA(Ser) + L-serine + ATP = L-seryl-tRNA(Ser) + AMP + diphosphate + H(+). The enzyme catalyses tRNA(Sec) + L-serine + ATP = L-seryl-tRNA(Sec) + AMP + diphosphate + H(+). It functions in the pathway aminoacyl-tRNA biosynthesis; selenocysteinyl-tRNA(Sec) biosynthesis; L-seryl-tRNA(Sec) from L-serine and tRNA(Sec): step 1/1. Functionally, catalyzes the attachment of serine to tRNA(Ser). Is also able to aminoacylate tRNA(Sec) with serine, to form the misacylated tRNA L-seryl-tRNA(Sec), which will be further converted into selenocysteinyl-tRNA(Sec). The protein is Serine--tRNA ligase of Staphylococcus aureus (strain MSSA476).